Here is a 310-residue protein sequence, read N- to C-terminus: Zinc finger protein-like 1 (310 aa).

The segment at 1 to 43 (MGLCKCPKRKVTNLFCFEHRVNVCEHCLVANHAKCIVQSYLQW) adopts a B box-type; degenerate zinc-finger fold. Residues 1–266 (MGLCKCPKRK…RPLTLLQRAG (266 aa)) lie on the Cytoplasmic side of the membrane. The segment at 53-101 (CRLCNIPLASRETTRLVCYDLFHWACLNERAAQLPRNTAPAGYQCPSCN) adopts an RING-type; degenerate zinc-finger fold. Positions 145–231 (PEPLNTSDFS…RTPGLHGDCD (87 aa)) are disordered. The segment covering 148 to 165 (LNTSDFSDWSSFNASSTP) has biased composition (polar residues). Residues 213–224 (KVYDTRDDDRTP) are compositionally biased toward basic and acidic residues. Residues 267 to 287 (LLLLLGLLGFLALLALMSRLG) form a helical membrane-spanning segment. Residues 288–310 (RAAADSDPNLDPLMNPHIRVGPS) are Lumenal-facing.

This sequence belongs to the ZFPL1 family. In terms of assembly, interacts with GOLGA2/GM130. Post-translationally, phosphorylated. Expressed strongly in the exocrine pancreas.

The protein localises to the golgi apparatus. The protein resides in the cis-Golgi network membrane. Required for cis-Golgi integrity and efficient ER to Golgi transport. Involved in the maintenance of the integrity of the cis-Golgi, possibly via its interaction with GOLGA2/GM130. The chain is Zinc finger protein-like 1 (ZFPL1) from Homo sapiens (Human).